We begin with the raw amino-acid sequence, 337 residues long: Anthraniloyl-CoA anthraniloyltransferase (337 aa).

T29 and F33 together coordinate anthraniloyl-CoA. The active-site Acyl-thioester intermediate is C113. Anthraniloyl-CoA-binding positions include 154-155 (RN), 221-224 (MRGR), and H258.

The protein belongs to the thiolase-like superfamily. FabH family. As to quaternary structure, homodimer.

It is found in the cytoplasm. The enzyme catalyses anthraniloyl-CoA + malonyl-CoA + H(+) = (2-aminobenzoyl)acetyl-CoA + CO2 + CoA. In terms of biological role, required for the biosynthesis of a number of signaling molecules, such as the quinolone signal 2-heptyl-3-hydroxy-4(1H)-quinolone (PQS), 2-heptyl-4-hydroxyquinoline (HHQ) and 2,4-dihydroxyquinoline (DHQ). These molecules are required for normal biofilm formation. Catalyzes the transfer of the anthraniloyl moiety from anthraniloyl-CoA to malonyl-CoA to form 2-aminobenzoylacetyl-CoA. The first step of the reaction is the formation of a covalent anthraniloyl-PqsD intermediate. Next, the short-lived intermediate 3-(2-aminophenyl)-3-oxopropanoyl-CoA is formed. An intramolecular rearrangement of this intermediate can give rise to 2,4-dihydroxyquinoline (DHQ). This Pseudomonas aeruginosa (strain ATCC 15692 / DSM 22644 / CIP 104116 / JCM 14847 / LMG 12228 / 1C / PRS 101 / PAO1) protein is Anthraniloyl-CoA anthraniloyltransferase (pqsD).